Reading from the N-terminus, the 87-residue chain is Large ribosomal subunit protein eL31 (87 aa).

The protein belongs to the eukaryotic ribosomal protein eL31 family.

The protein is Large ribosomal subunit protein eL31 of Methanosphaerula palustris (strain ATCC BAA-1556 / DSM 19958 / E1-9c).